Here is a 446-residue protein sequence, read N- to C-terminus: tRNA (guanine-N(7)-)-methyltransferase non-catalytic subunit TRM82 (446 aa).

The tract at residues Leu-67–Lys-97 is disordered. Residues Ser-87 to Lys-97 are compositionally biased toward low complexity. WD repeat units lie at residues Pro-107–Cys-147, Gly-202–His-243, and Gly-247–Lys-287.

It belongs to the WD repeat TRM82 family. Forms a heterodimer with the catalytic subunit TRM8.

It is found in the nucleus. The protein operates within tRNA modification; N(7)-methylguanine-tRNA biosynthesis. In terms of biological role, required for the formation of N(7)-methylguanine at position 46 (m7G46) in tRNA. In the complex, it is required to stabilize and induce conformational changes of the catalytic subunit. The protein is tRNA (guanine-N(7)-)-methyltransferase non-catalytic subunit TRM82 of Debaryomyces hansenii (strain ATCC 36239 / CBS 767 / BCRC 21394 / JCM 1990 / NBRC 0083 / IGC 2968) (Yeast).